Here is a 426-residue protein sequence, read N- to C-terminus: Putative acid phosphatase 1 (426 aa).

Residues 1–18 (MRVLFYVSILVIIASVHT) form the signal peptide. At 19–388 (QLISVHVIFR…SEWVMTPLSW (370 aa)) the chain is on the extracellular side. His-29 acts as the Nucleophile in catalysis. 2 N-linked (GlcNAc...) asparagine glycosylation sites follow: Asn-37 and Asn-145. Cys-133 and Cys-369 are joined by a disulfide. Asp-276 serves as the catalytic Proton donor. Residues 389-409 (IIVAIAILLLIALILMTYFVI) traverse the membrane as a helical segment. The Cytoplasmic segment spans residues 410-426 (RYKNRSIVNIKKLSLEN).

It belongs to the histidine acid phosphatase family.

The protein resides in the membrane. It catalyses the reaction a phosphate monoester + H2O = an alcohol + phosphate. The protein is Putative acid phosphatase 1 of Caenorhabditis elegans.